We begin with the raw amino-acid sequence, 902 residues long: Translation initiation factor IF-2 (902 aa).

Composition is skewed to basic and acidic residues over residues 1–12 (MVDTKTPGDKKL) and 43–60 (VVEKRGKRRIGDGPEPHA). A disordered region spans residues 1 to 276 (MVDTKTPGDK…KPGPQKERGR (276 aa)). A compositionally biased stretch (pro residues) spans 69–84 (PAAPAPSRPAPPPAPP). Over residues 111–174 (AKLREVEERR…ETEAKKRFGE (64 aa)) the composition is skewed to basic and acidic residues. 2 stretches are compositionally biased toward low complexity: residues 181–190 (AARPATAAPA) and 198–237 (APAARPGTTTTRPGTTTARPATTTAQRPGAPAGRGPAVAA). A tr-type G domain is found at 398-567 (TRSPVVTVMG…MIALQADILD (170 aa)). Residues 407 to 414 (GHVDHGKT) are G1. 407 to 414 (GHVDHGKT) is a GTP binding site. The interval 432 to 436 (GITQH) is G2. The segment at 455–458 (DTPG) is G3. Residues 455 to 459 (DTPGH) and 509 to 512 (NKID) each bind GTP. Positions 509-512 (NKID) are G4. The segment at 545 to 547 (SAK) is G5.

It belongs to the TRAFAC class translation factor GTPase superfamily. Classic translation factor GTPase family. IF-2 subfamily.

Its subcellular location is the cytoplasm. Functionally, one of the essential components for the initiation of protein synthesis. Protects formylmethionyl-tRNA from spontaneous hydrolysis and promotes its binding to the 30S ribosomal subunits. Also involved in the hydrolysis of GTP during the formation of the 70S ribosomal complex. The chain is Translation initiation factor IF-2 from Bradyrhizobium diazoefficiens (strain JCM 10833 / BCRC 13528 / IAM 13628 / NBRC 14792 / USDA 110).